A 134-amino-acid polypeptide reads, in one-letter code: ATP synthase epsilon chain (134 aa).

Basic and acidic residues predominate over residues Ala-94 to His-104. The segment at Ala-94 to Asn-115 is disordered.

This sequence belongs to the ATPase epsilon chain family. F-type ATPases have 2 components, CF(1) - the catalytic core - and CF(0) - the membrane proton channel. CF(1) has five subunits: alpha(3), beta(3), gamma(1), delta(1), epsilon(1). CF(0) has three main subunits: a, b and c.

The protein resides in the cell membrane. Produces ATP from ADP in the presence of a proton gradient across the membrane. The sequence is that of ATP synthase epsilon chain from Staphylococcus epidermidis (strain ATCC 35984 / DSM 28319 / BCRC 17069 / CCUG 31568 / BM 3577 / RP62A).